A 357-amino-acid polypeptide reads, in one-letter code: Protein RecA (357 aa).

An ATP-binding site is contributed by 73–80 (GPESSGKT).

Belongs to the RecA family.

The protein localises to the cytoplasm. Functionally, can catalyze the hydrolysis of ATP in the presence of single-stranded DNA, the ATP-dependent uptake of single-stranded DNA by duplex DNA, and the ATP-dependent hybridization of homologous single-stranded DNAs. It interacts with LexA causing its activation and leading to its autocatalytic cleavage. This Nitratidesulfovibrio vulgaris (strain ATCC 29579 / DSM 644 / CCUG 34227 / NCIMB 8303 / VKM B-1760 / Hildenborough) (Desulfovibrio vulgaris) protein is Protein RecA.